Here is a 156-residue protein sequence, read N- to C-terminus: Succinate dehydrogenase [ubiquinone] cytochrome b small subunit 1, mitochondrial (156 aa).

The transit peptide at 1–25 (MLSAVRRAIPLSARILRTSLIQRCA) directs the protein to the mitochondrion. The Mitochondrial matrix segment spans residues 26–59 (GATSAAVTGAAPPQFDPIAAEKGFKPLHSHGTLF). A helical transmembrane segment spans residues 60-78 (KIERYFAAAMVPLIPAAYF). Residues 79–83 (IHGRE) lie on the Mitochondrial intermembrane side of the membrane. A helical transmembrane segment spans residues 84–104 (MDLCLALALTLHVHWGVWGVV). Position 95 (H95) interacts with heme b. The Mitochondrial matrix portion of the chain corresponds to 105 to 119 (NDYGRPFVLGDTLAA). Residue Y107 coordinates a rhodoquinol. A helical membrane pass occupies residues 120–141 (AVRVGAYIFTACLLAGLLYFNE). The Mitochondrial intermembrane portion of the chain corresponds to 142–156 (HDVGLTRAFEMVWEL).

This sequence belongs to the CybS family. As to quaternary structure, component of the mitochondrial electron transport chain complex II composed of four subunits: a flavoprotein (Fp), an iron-sulfur protein (Ip), and a large cytochrome b (CybL) subunit and a small cytochrome b (CybS) subunit. There are 2 developmental stage-specific forms of complex II which have the Ip and CybL subunits in common. Complex II from the free-living larvae (aerobic environment) acts as a succinate dehydrogenase and is composed of the common subunit Ip and CybL and the stage specific subunits FpL and CybSL. Complex II from parasitic larvae and adults (anaerobic environment) acts as a fumarate reductase and is composed of the common subunit Ip and CybL and the stage specific subunits FpA and CybSA. It depends on heme b as a cofactor. Expressed in adult muscles (at protein level).

It localises to the mitochondrion inner membrane. Membrane-bound small subunit (CybS) of the mitochondrial electron transport chain complex II, which together with the membrane-bound large subunit (CybL), anchor the catalytic subunits to the inner mitochondria membrane. During the parasitic larvae and adult stages, which occur in an anaerobic environment, complex II acts as a fumarate reductase by transferring electrons from rhodoquinol to fumarate. The polypeptide is Succinate dehydrogenase [ubiquinone] cytochrome b small subunit 1, mitochondrial (Ascaris suum (Pig roundworm)).